We begin with the raw amino-acid sequence, 84 residues long: MIMAAGSTGERPFFEIITSIRYWIIHAVTLPAIFIAGFLFVYTGLAYDAFGTPRPDSYFQSSESKAPVVTQRYEAKSQLDLRTK.

The helical transmembrane segment at 24–38 (IIHAVTLPAIFIAGF) threads the bilayer. His26 is a binding site for heme.

It belongs to the PsbE/PsbF family. Heterodimer of an alpha subunit and a beta subunit. PSII is composed of 1 copy each of membrane proteins PsbA, PsbB, PsbC, PsbD, PsbE, PsbF, PsbH, PsbI, PsbJ, PsbK, PsbL, PsbM, PsbT, PsbX, PsbY, Psb30/Ycf12, peripheral proteins PsbO, CyanoQ (PsbQ), PsbU, PsbV and a large number of cofactors. It forms dimeric complexes. The cofactor is heme b.

The protein resides in the cellular thylakoid membrane. Functionally, this b-type cytochrome is tightly associated with the reaction center of photosystem II (PSII). PSII is a light-driven water:plastoquinone oxidoreductase that uses light energy to abstract electrons from H(2)O, generating O(2) and a proton gradient subsequently used for ATP formation. It consists of a core antenna complex that captures photons, and an electron transfer chain that converts photonic excitation into a charge separation. This Prochlorococcus marinus (strain MIT 9301) protein is Cytochrome b559 subunit alpha.